We begin with the raw amino-acid sequence, 599 residues long: DNA-directed RNA polymerase III subunit RPC3 (599 aa).

The disordered stretch occupies residues 350 to 375 (PKKRSASNGDDERPTKKIKTEDSDDI). Residues 359 to 370 (DDERPTKKIKTE) show a composition bias toward basic and acidic residues. The interval 528–549 (LIFSMAEILSNIQAFREDHKIL) is leucine-zipper.

Belongs to the RNA polymerase beta chain family. In terms of assembly, component of the RNA polymerase III (Pol III) complex consisting of 17 subunits.

It is found in the nucleus. Functionally, DNA-dependent RNA polymerase catalyzes the transcription of DNA into RNA using the four ribonucleoside triphosphates as substrates. Specific core component of RNA polymerase III which synthesizes small RNAs, such as 5S rRNA and tRNAs. The chain is DNA-directed RNA polymerase III subunit RPC3 (RPC82) from Scheffersomyces stipitis (strain ATCC 58785 / CBS 6054 / NBRC 10063 / NRRL Y-11545) (Yeast).